The primary structure comprises 5043 residues: Polyketide synthase PksJ (5043 aa).

An adenylation 1 region spans residues 141–481 (AVITDRGMHQ…ELPEIETSYT (341 aa)). Residues 590–667 (RVREEIQKHL…RLASYLSEHE (78 aa)) enclose the Carrier 1 domain. At Ser-627 the chain carries O-(pantetheine 4'-phosphoryl)serine. Residues 690–989 (QATFQPLSEV…NMLPIRSELN (300 aa)) are condensation. The segment at 1181 to 1578 (TYRELDEKST…EHPGILECVV (398 aa)) is adenylation 2. The Carrier 2 domain maps to 1654 to 1729 (TSPKNIQDTV…NISQYITEQR (76 aa)). Ser-1689 carries the O-(pantetheine 4'-phosphoryl)serine modification. Positions 1760 to 2186 (DDSVAIIGIS…GTNTHAIFEQ (427 aa)) constitute a Ketosynthase family 3 (KS3) 1 domain. Active-site for beta-ketoacyl synthase 1 activity residues include Cys-1932, His-2068, and His-2108. The segment at 2374-2499 (HPLLHQNTSD…GSAELASAAE (126 aa)) is N-terminal hotdog fold. Residues 2374–2661 (HPLLHQNTSD…TRVLEGEVHT (288 aa)) form the PKS/mFAS DH domain. The active-site Proton acceptor; for dehydratase activity is His-2403. A C-terminal hotdog fold region spans residues 2513–2661 (GKGKMSPDQF…TRVLEGEVHT (149 aa)). Catalysis depends on Asp-2575, which acts as the Proton donor; for dehydratase activity. Carrier domains lie at 3114–3188 (RKLE…VAAY) and 3212–3286 (SSLE…TVEH). O-(pantetheine 4'-phosphoryl)serine is present on residues Ser-3148 and Ser-3246. A disordered region spans residues 3291 to 3314 (VQEREKPEGQEELQTKSSEAPKIT). Residues 3339–3779 (FEPVAIVGIS…GVNAHIVIEE (441 aa)) form the Ketosynthase family 3 (KS3) 2 domain. Active-site for beta-ketoacyl synthase 2 activity residues include Cys-3511, His-3646, and His-3695. A coiled-coil region spans residues 3839–3872 (REEMDERLACVAGTMQELEEKLQAFVDGKEETDE). One can recognise a Carrier 5 domain in the interval 4459–4536 (GLLSETQSWL…RFADWLIGSY (78 aa)). An O-(pantetheine 4'-phosphoryl)serine modification is found at Ser-4496. The Ketosynthase family 3 (KS3) 3 domain maps to 4588–4992 (AEGIAVVGLS…GTNAHVIVEA (405 aa)). The For beta-ketoacyl synthase 3 activity role is filled by Cys-4743.

It belongs to the ATP-dependent AMP-binding enzyme family. Requires pantetheine 4'-phosphate as cofactor.

The protein resides in the cytoplasm. It participates in antibiotic biosynthesis; bacillaene biosynthesis. Functionally, involved in some intermediate steps for the synthesis of the antibiotic polyketide bacillaene which is involved in secondary metabolism. The chain is Polyketide synthase PksJ (pksJ) from Bacillus subtilis (strain 168).